Reading from the N-terminus, the 282-residue chain is B3 domain-containing protein At5g25475 (282 aa).

The TF-B3 DNA-binding region spans 20–114 (WKSLSPGQTW…NLEVQIFKNN (95 aa)). A disordered region spans residues 127–178 (PETEPFHPTPKKPHKETTPASSFASGSGCSANGGTNGRGKQRSSDVKNPERY). Positions 144–159 (TPASSFASGSGCSANG) are enriched in low complexity.

It is found in the nucleus. The sequence is that of B3 domain-containing protein At5g25475 from Arabidopsis thaliana (Mouse-ear cress).